Here is a 395-residue protein sequence, read N- to C-terminus: Elongation factor Tu (395 aa).

Residues 10-204 (KPHVNIGTIG…NVDEYIPLPQ (195 aa)) form the tr-type G domain. Residues 19–26 (GHVDHGKT) form a G1 region. 19 to 26 (GHVDHGKT) serves as a coordination point for GTP. Thr-26 is a Mg(2+) binding site. The interval 60–64 (GITIN) is G2. The G3 stretch occupies residues 81 to 84 (DCPG). GTP contacts are provided by residues 81–85 (DCPGH) and 136–139 (NKVD). Positions 136–139 (NKVD) are G4. A G5 region spans residues 174 to 176 (SAL).

Belongs to the TRAFAC class translation factor GTPase superfamily. Classic translation factor GTPase family. EF-Tu/EF-1A subfamily. As to quaternary structure, monomer.

The protein localises to the cytoplasm. The enzyme catalyses GTP + H2O = GDP + phosphate + H(+). Its function is as follows. GTP hydrolase that promotes the GTP-dependent binding of aminoacyl-tRNA to the A-site of ribosomes during protein biosynthesis. In Amoebophilus asiaticus (strain 5a2), this protein is Elongation factor Tu.